The chain runs to 2017 residues: Protein cbp-1 (2017 aa).

Residues M1–S13 show a composition bias toward basic and acidic residues. The segment at M1 to Q182 is disordered. Low complexity-rich tracts occupy residues A21–A30 and Q78–N90. A compositionally biased stretch (polar residues) spans N106 to R116. The segment covering M141–P151 has biased composition (low complexity). The span at G152–G164 shows a compositional bias: pro residues. A compositionally biased stretch (low complexity) spans Q165–Q182. R234 is modified (symmetric dimethylarginine; by PRMT5; in vitro). Residues S307–Q398 form a disordered region. The segment covering Q340–Q379 has biased composition (low complexity). The segment at D399 to L505 adopts a TAZ-type 1 zinc-finger fold. 2 disordered regions span residues E558 to D593 and G706 to F864. Residues G559–G573 show a composition bias toward low complexity. In terms of domain architecture, KIX spans D593–Q672. Over residues P721–A773 the composition is skewed to polar residues. Residues K834–P854 are compositionally biased toward basic and acidic residues. The region spanning F864–V970 is the Bromo domain. Interaction with histone regions lie at residues D902–K948 and Y1224–D1226. The CBP/p300-type HAT domain occupies K1112–S1492. Acetyl-CoA contacts are provided by residues L1225–S1227, R1237–T1238, I1284, R1289, and W1293. Positions N1349–E1358 are enriched in basic and acidic residues. The segment at N1349–S1401 is disordered. Residues K1378 to A1399 show a composition bias toward basic residues. The ZZ-type zinc finger occupies G1494 to G1540. 8 residues coordinate Zn(2+): C1499, C1502, C1510, C1513, C1519, C1522, H1528, and H1530. The segment at G1550 to I1631 adopts a TAZ-type 2 zinc-finger fold. Disordered regions lie at residues G1656 to R1828 and S1908 to Q2017. Polar residues predominate over residues T1667–N1678. Positions Q1699–S1708 are enriched in low complexity. Positions P1748 to Y1757 are enriched in polar residues. Composition is skewed to low complexity over residues M1793–G1812 and S1908–A1932. The span at Q1943–M1962 shows a compositional bias: polar residues. The span at Q1963 to Q2017 shows a compositional bias: low complexity.

As to quaternary structure, interacts (via N-terminus domain and HAT domain) with prmt-5; the interaction results in methylation of cbp-1. Interacts (via HAT domain) with cep-1; cep-1 transcriptional activity may be inhibited by interaction with methylated cbp-1. Component of a complex that contains prmt-5 and cbp-1. In terms of processing, methylation by prmt-5 may repress the capacity of cbp-1 to enhance cep-1-dependent transcription of egl-1.

The protein localises to the nucleus. The catalysed reaction is L-lysyl-[protein] + acetyl-CoA = N(6)-acetyl-L-lysyl-[protein] + CoA + H(+). Acetyltransferase enzyme. Acetylates histones, giving a specific tag for transcriptional activation. May prevent DNA damage-induced apoptosis by inhibiting cep-1-dependent transcription activation of the programmed cell death activator egl-1. In differentiated cells, negatively regulates localization of heterochromatin to the nuclear periphery. Plays a role in migration of gonadal distal tip cells, where it probably modulates expression of genes involved in integrin-mediated adhesion. The polypeptide is Protein cbp-1 (cbp-1) (Caenorhabditis elegans).